The sequence spans 139 residues: Putative truncated protein trichome birefringence-like 46 (139 aa).

This sequence belongs to the PC-esterase family. TBL subfamily.

The sequence is that of Putative truncated protein trichome birefringence-like 46 (TBL46) from Arabidopsis thaliana (Mouse-ear cress).